Consider the following 162-residue polypeptide: Ribosome-binding factor A (162 aa).

The disordered stretch occupies residues 124–162 (ARVRSGAKPAGEADPYRESGSGVEPGRDGSIGDDDQPEY).

Belongs to the RbfA family. In terms of assembly, monomer. Binds 30S ribosomal subunits, but not 50S ribosomal subunits or 70S ribosomes.

It localises to the cytoplasm. Functionally, one of several proteins that assist in the late maturation steps of the functional core of the 30S ribosomal subunit. Associates with free 30S ribosomal subunits (but not with 30S subunits that are part of 70S ribosomes or polysomes). Required for efficient processing of 16S rRNA. May interact with the 5'-terminal helix region of 16S rRNA. This is Ribosome-binding factor A from Mycolicibacterium paratuberculosis (strain ATCC BAA-968 / K-10) (Mycobacterium paratuberculosis).